The sequence spans 77 residues: TSC22 domain family protein 3 (77 aa).

Methionine 1 carries the post-translational modification N-acetylmethionine. Residues 19 to 40 form a leucine-zipper region; it reads LKEQIRELVEKNSQLERENTLL. The tract at residues 41–77 is disordered; sequence KTLASPEQLEKFQSRLSPEEPAPETPEAPEAPGGSAV. A Phosphoserine modification is found at serine 45. The segment covering 68-77 has biased composition (low complexity); that stretch reads APEAPGGSAV.

Belongs to the TSC-22/Dip/Bun family. Can form homodimers, however it is likely to function as a monomer. Interacts with AP1 and NFKB1. Interacts with MYOD1. Interacts with HDAC1; this interaction affects HDAC1 activity on MYOG promoter and thus inhibits MYOD1 transcriptional activity.

The protein resides in the cytoplasm. Its subcellular location is the nucleus. Protects T-cells from IL2 deprivation-induced apoptosis through the inhibition of FOXO3A transcriptional activity that leads to the down-regulation of the pro-apoptotic factor BCL2L11. In macrophages, plays a role in the anti-inflammatory and immunosuppressive effects of glucocorticoids and IL10. In T-cells, inhibits anti-CD3-induced NFKB1 nuclear translocation. In vitro, suppresses AP1 and NFKB1 DNA-binding activities. Inhibits myogenic differentiation and mediates anti-myogenic effects of glucocorticoids by binding and regulating MYOD1 and HDAC1 transcriptional activity resulting in reduced expression of MYOG. The polypeptide is TSC22 domain family protein 3 (TSC22D3) (Sus scrofa (Pig)).